The following is a 22-amino-acid chain: Fuctinin-1 (22 aa).

Residues 1–22 (SASPGLPKGEKEQQEAIEHIDE) are disordered. The span at 8–22 (KGEKEQQEAIEHIDE) shows a compositional bias: basic and acidic residues.

To human SET/PHAPII protein. In terms of assembly, oligomer.

The protein localises to the cytoplasm. Has a role in the physiological regulation of fucosylation processes. In Rattus norvegicus (Rat), this protein is Fuctinin-1.